The chain runs to 242 residues: Probable ergothioneine transport ATP-binding protein EgtUA (242 aa).

In terms of domain architecture, ABC transporter spans 2-236 (IEYKNVALRY…PATDFVADLF (235 aa)). 34 to 41 (GPSGSGKT) serves as a coordination point for ATP.

This sequence belongs to the ABC transporter superfamily. As to quaternary structure, the complex is probably composed of at least an ATP-binding protein (EgtUA) and a transmembrane protein (EgtUBC).

It localises to the cell inner membrane. The catalysed reaction is ergothioneine(out) + ATP + H2O = ergothioneine(in) + ADP + phosphate + H(+). Part of an ABC transporter complex EgtU required for the uptake of ergothioneine (EGT), a natural low-molecular weight (LMW) thiol antioxidant. Probably responsible for energy coupling to the transport system. The chain is Probable ergothioneine transport ATP-binding protein EgtUA from Streptococcus pneumoniae serotype 2 (strain D39 / NCTC 7466).